A 392-amino-acid chain; its full sequence is Phosphoglycerate kinase (392 aa).

Substrate-binding positions include 19 to 21 (DYN), arginine 34, 57 to 60 (HLGR), arginine 116, and arginine 149. Residues lysine 199, glutamate 321, and 347–350 (GGDS) contribute to the ATP site.

Belongs to the phosphoglycerate kinase family. In terms of assembly, monomer.

The protein localises to the cytoplasm. It carries out the reaction (2R)-3-phosphoglycerate + ATP = (2R)-3-phospho-glyceroyl phosphate + ADP. It functions in the pathway carbohydrate degradation; glycolysis; pyruvate from D-glyceraldehyde 3-phosphate: step 2/5. The sequence is that of Phosphoglycerate kinase from Thermomicrobium roseum (strain ATCC 27502 / DSM 5159 / P-2).